A 92-amino-acid polypeptide reads, in one-letter code: Defensin-like protein 226 (92 aa).

The first 27 residues, 1–27 (MKCGVLFMISCLLITFLVLSHVREVES), serve as a signal peptide directing secretion. 4 cysteine pairs are disulfide-bonded: Cys33-Cys92, Cys43-Cys71, Cys51-Cys86, and Cys69-Cys88.

Belongs to the DEFL family.

It is found in the secreted. The polypeptide is Defensin-like protein 226 (SCRL2) (Arabidopsis thaliana (Mouse-ear cress)).